The primary structure comprises 298 residues: ER-bound oxygenase mpaB (298 aa).

Over 1–24 (MDKGTSFFTTPSFSATTRAIFNTM) the chain is Lumenal. Residues 25–45 (PQWFSFAVGLLIAYPLLINSL) traverse the membrane as a helical segment. Residues 46-298 (RYRRLKQLQK…RLRKAMLYVE (253 aa)) lie on the Cytoplasmic side of the membrane.

The protein belongs to the mpaB oxygenase family.

It is found in the endoplasmic reticulum membrane. It carries out the reaction 4-farnesyl-3,5-dihydroxy-6-methylphthalide + AH2 + 2 O2 = (4E,8E)-10-(4,6-dihydroxy-7-methyl-3-oxo-1,3-dihydro-2-benzofuran-5-yl)-4,8-dimethyldeca-4,8-dienoate + acetone + A + H2O + H(+). It functions in the pathway secondary metabolite biosynthesis; terpenoid biosynthesis. Its function is as follows. ER-bound oxygenase; part of the gene cluster that mediates the biosynthesis of mycophenolic acid (MPA), the first isolated antibiotic natural product in the world obtained from a culture of Penicillium brevicompactum in 1893. MpaB catalyzes the oxidative cleavage the C19-C20 double bond in farnesyl-DHMP (FDHMP) to yield FDHMP-3C via a mycophenolic aldehyde intermediate. The first step of the pathway is the synthesis of 5-methylorsellinic acid (5MOA) by the cytosolic polyketide synthase mpaC. 5MOA is then converted to the phthalide compound 5,7-dihydroxy-4,6-dimethylphthalide (DHMP) by the endoplasmic reticulum-bound cytochrome P450 monooxygenase mpaDE. MpaDE first catalyzes hydroxylation of 5-MOA to 4,6-dihydroxy-2-(hydroxymethyl)-3-methylbenzoic acid (DHMB). MpaDE then acts as a lactone synthase that catalyzes the ring closure to convert DHMB into DHMP. The next step is the prenylation of DHMP by the Golgi apparatus-associated prenyltransferase mpaA to yield farnesyl-DHMP (FDHMP). The ER-bound oxygenase mpaB then mediates the oxidative cleavage the C19-C20 double bond in FDHMP to yield FDHMP-3C via a mycophenolic aldehyde intermediate. The O-methyltransferase mpaG catalyzes the methylation of FDHMP-3C to yield MFDHMP-3C. After the cytosolic methylation of FDHMP-3C, MFDHMP-3C enters into peroxisomes probably via free diffusion due to its low molecular weight. Upon a peroxisomal CoA ligation reaction, catalyzed by a beta-oxidation component enzyme acyl-CoA ligase ACL891, MFDHMP-3C-CoA would then be restricted to peroxisomes for the following beta-oxidation pathway steps. The peroxisomal beta-oxidation machinery than converts MFDHMP-3C-CoA into MPA_CoA, via a beta-oxidation chain-shortening process. Finally mpaH acts as a peroxisomal acyl-CoA hydrolase with high substrate specificity toward MPA-CoA to release the final product MPA. This is ER-bound oxygenase mpaB from Penicillium roqueforti (strain FM164).